We begin with the raw amino-acid sequence, 438 residues long: Adenylosuccinate synthetase (438 aa).

GTP is bound by residues 13 to 19 (GDEGKGK) and 41 to 43 (GHT). Asp14 acts as the Proton acceptor in catalysis. The Mg(2+) site is built by Asp14 and Gly41. Residues 14-17 (DEGK), 39-42 (NAGH), Thr130, Arg144, Gln225, Thr240, and Arg312 each bind IMP. The active-site Proton donor is the His42. 308–314 (ATTGRQR) contributes to the substrate binding site. GTP contacts are provided by residues Arg314, 340–342 (KLD), and 422–424 (STG).

Belongs to the adenylosuccinate synthetase family. Homodimer. Requires Mg(2+) as cofactor.

Its subcellular location is the cytoplasm. It catalyses the reaction IMP + L-aspartate + GTP = N(6)-(1,2-dicarboxyethyl)-AMP + GDP + phosphate + 2 H(+). It participates in purine metabolism; AMP biosynthesis via de novo pathway; AMP from IMP: step 1/2. Functionally, plays an important role in the de novo pathway of purine nucleotide biosynthesis. Catalyzes the first committed step in the biosynthesis of AMP from IMP. The sequence is that of Adenylosuccinate synthetase from Ruthia magnifica subsp. Calyptogena magnifica.